A 320-amino-acid polypeptide reads, in one-letter code: Aspartate carbamoyltransferase catalytic subunit (320 aa).

R68 and T69 together coordinate carbamoyl phosphate. K96 contributes to the L-aspartate binding site. Carbamoyl phosphate is bound by residues R118, H148, and Q151. L-aspartate contacts are provided by R181 and R236. 2 residues coordinate carbamoyl phosphate: G277 and P278.

The protein belongs to the aspartate/ornithine carbamoyltransferase superfamily. ATCase family. As to quaternary structure, heterododecamer (2C3:3R2) of six catalytic PyrB chains organized as two trimers (C3), and six regulatory PyrI chains organized as three dimers (R2).

The enzyme catalyses carbamoyl phosphate + L-aspartate = N-carbamoyl-L-aspartate + phosphate + H(+). The protein operates within pyrimidine metabolism; UMP biosynthesis via de novo pathway; (S)-dihydroorotate from bicarbonate: step 2/3. In terms of biological role, catalyzes the condensation of carbamoyl phosphate and aspartate to form carbamoyl aspartate and inorganic phosphate, the committed step in the de novo pyrimidine nucleotide biosynthesis pathway. This is Aspartate carbamoyltransferase catalytic subunit from Polaromonas sp. (strain JS666 / ATCC BAA-500).